The chain runs to 435 residues: Glutamate-1-semialdehyde 2,1-aminomutase (435 aa).

An N6-(pyridoxal phosphate)lysine modification is found at Lys269.

This sequence belongs to the class-III pyridoxal-phosphate-dependent aminotransferase family. HemL subfamily. Homodimer. Pyridoxal 5'-phosphate is required as a cofactor.

It localises to the cytoplasm. It carries out the reaction (S)-4-amino-5-oxopentanoate = 5-aminolevulinate. It participates in porphyrin-containing compound metabolism; protoporphyrin-IX biosynthesis; 5-aminolevulinate from L-glutamyl-tRNA(Glu): step 2/2. The polypeptide is Glutamate-1-semialdehyde 2,1-aminomutase (Gemmatimonas aurantiaca (strain DSM 14586 / JCM 11422 / NBRC 100505 / T-27)).